We begin with the raw amino-acid sequence, 444 residues long: Docking protein 3 (444 aa).

One can recognise a PH domain in the interval 7 to 123 (PVKDGILYQQ…WVDPICQLAF (117 aa)). Residue serine 138 is modified to Phosphoserine. In terms of domain architecture, IRS-type PTB spans 157–261 (EVTEFPVIVQ…ARQRERLPEL (105 aa)). Serine 274 is subject to Phosphoserine. A disordered region spans residues 278–299 (LEPPGELREVAPGFELPTPRKL). A phosphoserine mark is found at serine 308 and serine 314. Tyrosine 325 carries the phosphotyrosine modification. The disordered stretch occupies residues 354–390 (GLTNGGPEAQEGPPGGRSPLGSPIYHNTEDLSWPGSA). Residues 358–376 (GGPEAQEGPPGGRSPLGSP) show a composition bias toward low complexity. Serine 371 bears the Phosphoserine mark.

It belongs to the DOK family. Type A subfamily. In terms of assembly, on tyrosine phosphorylation, interacts with CSK and INPP5D/SHIP1 via their SH2 domains. Both Tyr-325 and Tyr-343 are required for interaction with INPP5D. Only Tyr-325 is required for interaction with CSK. Binds ABL1 through the PTB domain and in a kinase-dependent manner. Does not interact with RasGAP. Constitutively tyrosine-phosphorylated. In terms of processing, on IL2 stimulation, phosphorylated on C-terminal tyrosine residues possibly by Src kinases. Can also be phosphorylated by ABL1 kinase. Predominantly expressed in bone marrow, spleen and lung. Low levels in heart, brain, liver, muscle, thymus, kidney and testis. Highly expressed in B-cells and macrophages.

It is found in the cytoplasm. The protein resides in the cell membrane. In terms of biological role, DOK proteins are enzymatically inert adaptor or scaffolding proteins. They provide a docking platform for the assembly of multimolecular signaling complexes. DOK3 is a negative regulator of JNK signaling in B-cells through interaction with INPP5D/SHIP1. May modulate ABL1 function. In Mus musculus (Mouse), this protein is Docking protein 3 (Dok3).